Consider the following 116-residue polypeptide: NAD(P)H-quinone oxidoreductase subunit M (116 aa).

This sequence belongs to the complex I NdhM subunit family. As to quaternary structure, NDH-1 can be composed of about 15 different subunits; different subcomplexes with different compositions have been identified which probably have different functions.

It is found in the cellular thylakoid membrane. It catalyses the reaction a plastoquinone + NADH + (n+1) H(+)(in) = a plastoquinol + NAD(+) + n H(+)(out). The catalysed reaction is a plastoquinone + NADPH + (n+1) H(+)(in) = a plastoquinol + NADP(+) + n H(+)(out). Functionally, NDH-1 shuttles electrons from an unknown electron donor, via FMN and iron-sulfur (Fe-S) centers, to quinones in the respiratory and/or the photosynthetic chain. The immediate electron acceptor for the enzyme in this species is believed to be plastoquinone. Couples the redox reaction to proton translocation, and thus conserves the redox energy in a proton gradient. Cyanobacterial NDH-1 also plays a role in inorganic carbon-concentration. The protein is NAD(P)H-quinone oxidoreductase subunit M of Synechococcus sp. (strain RCC307).